Reading from the N-terminus, the 250-residue chain is 3-deoxy-manno-octulosonate cytidylyltransferase (250 aa).

It belongs to the KdsB family.

The protein resides in the cytoplasm. It carries out the reaction 3-deoxy-alpha-D-manno-oct-2-ulosonate + CTP = CMP-3-deoxy-beta-D-manno-octulosonate + diphosphate. It participates in nucleotide-sugar biosynthesis; CMP-3-deoxy-D-manno-octulosonate biosynthesis; CMP-3-deoxy-D-manno-octulosonate from 3-deoxy-D-manno-octulosonate and CTP: step 1/1. It functions in the pathway bacterial outer membrane biogenesis; lipopolysaccharide biosynthesis. In terms of biological role, activates KDO (a required 8-carbon sugar) for incorporation into bacterial lipopolysaccharide in Gram-negative bacteria. This is 3-deoxy-manno-octulosonate cytidylyltransferase from Janthinobacterium sp. (strain Marseille) (Minibacterium massiliensis).